Consider the following 98-residue polypeptide: UPF0235 protein Ping_3043 (98 aa).

Belongs to the UPF0235 family.

This is UPF0235 protein Ping_3043 from Psychromonas ingrahamii (strain DSM 17664 / CCUG 51855 / 37).